Consider the following 171-residue polypeptide: Large ribosomal subunit protein bL9 (171 aa).

This sequence belongs to the bacterial ribosomal protein bL9 family.

Functionally, binds to the 23S rRNA. The sequence is that of Large ribosomal subunit protein bL9 from Rickettsia felis (strain ATCC VR-1525 / URRWXCal2) (Rickettsia azadi).